Here is an 838-residue protein sequence, read N- to C-terminus: Ribonucleoside-diphosphate reductase large subunit (838 aa).

Positions 6–97 (KLVTKRDGSV…VTALHKTTTE (92 aa)) constitute an ATP-cone domain. ATP is bound by residues 10–11 (KR), 16–22 (EPYDEKV), Thr-58, and Asp-62. Residue Ser-227 participates in GDP binding. Cys-228 and Cys-454 are joined by a disulfide. DTTP is bound by residues 236–238 (DSI), Lys-253, Arg-266, and 273–274 (AG). Position 437 (Asn-437) interacts with GDP. Asn-437 (proton acceptor) is an active-site residue. Residue Cys-439 is the Cysteine radical intermediate of the active site. GDP-binding positions include Glu-441 and 626–629 (TAST). Glu-441 serves as the catalytic Proton acceptor. A compositionally biased stretch (basic and acidic residues) spans 780 to 794 (KELPKPDKQSKEEVH). Residues 780 to 838 (KELPKPDKQSKEEVHGSVGRGKRKRVGEKPTANHSNAGAPNLNGPPDTDGDGGCLNCGS) form a disordered region.

It belongs to the ribonucleoside diphosphate reductase large chain family. Heterodimer of a large and a small subunit.

The enzyme catalyses a 2'-deoxyribonucleoside 5'-diphosphate + [thioredoxin]-disulfide + H2O = a ribonucleoside 5'-diphosphate + [thioredoxin]-dithiol. It carries out the reaction dCDP + [thioredoxin]-disulfide + H2O = CDP + [thioredoxin]-dithiol. Its activity is regulated as follows. Under complex allosteric control mediated by deoxynucleoside triphosphates and ATP binding to separate specificity and activation sites on the large subunit. The type of nucleotide bound at the specificity site determines substrate preference. It seems probable that ATP makes the enzyme reduce CDP and UDP, dGTP favors ADP reduction and dTTP favors GDP reduction. Stimulated by ATP and inhibited by dATP binding to the activity site. In terms of biological role, provides the precursors necessary for DNA synthesis. Catalyzes the rate limiting step in the de novo synthesis of deoxyribonucleotides by directly reducing ribonucleotides to the corresponding deoxyribonucleotides. The sequence is that of Ribonucleoside-diphosphate reductase large subunit (RNR1) from Trypanosoma brucei brucei.